The sequence spans 342 residues: Ribosomal RNA small subunit methyltransferase C (342 aa).

This sequence belongs to the methyltransferase superfamily. RsmC family. As to quaternary structure, monomer.

The protein resides in the cytoplasm. The enzyme catalyses guanosine(1207) in 16S rRNA + S-adenosyl-L-methionine = N(2)-methylguanosine(1207) in 16S rRNA + S-adenosyl-L-homocysteine + H(+). Its function is as follows. Specifically methylates the guanine in position 1207 of 16S rRNA in the 30S particle. In Salmonella gallinarum (strain 287/91 / NCTC 13346), this protein is Ribosomal RNA small subunit methyltransferase C.